We begin with the raw amino-acid sequence, 624 residues long: Chaperone protein HtpG (624 aa).

Residues 1 to 336 (MSMKGQETRG…SNDLPLNVSR (336 aa)) are a; substrate-binding. A b region spans residues 337–552 (EILQDSRVTQ…ADEMSTQMAK (216 aa)). The tract at residues 553 to 624 (LFAAAGQQAP…IRRMNQLLTA (72 aa)) is c.

Belongs to the heat shock protein 90 family. Homodimer.

Its subcellular location is the cytoplasm. Functionally, molecular chaperone. Has ATPase activity. In Yersinia enterocolitica serotype O:8 / biotype 1B (strain NCTC 13174 / 8081), this protein is Chaperone protein HtpG.